We begin with the raw amino-acid sequence, 677 residues long: Methionine--tRNA ligase (677 aa).

The 'HIGH' region signature appears at 15-25; sequence PYANGSIHLGH. Zn(2+) contacts are provided by Cys-146, Cys-149, Cys-159, and Cys-162. The 'KMSKS' region motif lies at 333-337; that stretch reads KMSKS. Residue Lys-336 coordinates ATP. The tRNA-binding domain occupies 575-677; the sequence is DFAKVDLRVA…AGAKPGHQVK (103 aa).

This sequence belongs to the class-I aminoacyl-tRNA synthetase family. MetG type 1 subfamily. Homodimer. Zn(2+) serves as cofactor.

Its subcellular location is the cytoplasm. The catalysed reaction is tRNA(Met) + L-methionine + ATP = L-methionyl-tRNA(Met) + AMP + diphosphate. Is required not only for elongation of protein synthesis but also for the initiation of all mRNA translation through initiator tRNA(fMet) aminoacylation. The protein is Methionine--tRNA ligase of Escherichia coli (strain UTI89 / UPEC).